A 244-amino-acid chain; its full sequence is Probable transcriptional regulatory protein Aasi_0624 (244 aa).

Belongs to the TACO1 family.

It is found in the cytoplasm. This chain is Probable transcriptional regulatory protein Aasi_0624, found in Amoebophilus asiaticus (strain 5a2).